The following is a 488-amino-acid chain: ATP-dependent RNA helicase dbp3 (488 aa).

A compositionally biased stretch (basic and acidic residues) spans 1-29 (MAKREHQDQTGDSRPSKKSKGTKDTKKNT). The tract at residues 1–42 (MAKREHQDQTGDSRPSKKSKGTKDTKKNTEVSPPYFQSPALD) is disordered. The Q motif signature appears at 92 to 100 (GFASPTAIQ). Residues 104 to 279 (WPLLFAGRDV…STFMTSPVTV (176 aa)) enclose the Helicase ATP-binding domain. 117–124 (AETGSGKT) provides a ligand contact to ATP. Residues 226-229 (DEAD) carry the DEAD box motif. Residues 306–457 (EKEQRLVQIL…EVPEALLKFG (152 aa)) form the Helicase C-terminal domain.

This sequence belongs to the DEAD box helicase family. DDX5/DBP2 subfamily.

Its subcellular location is the nucleus. It is found in the nucleolus. The catalysed reaction is ATP + H2O = ADP + phosphate + H(+). Its function is as follows. ATP-dependent RNA helicase required for 60S ribosomal subunit synthesis. Involved in efficient pre-rRNA processing, predominantly at site A3, which is necessary for the normal formation of 25S and 5.8S rRNAs. The polypeptide is ATP-dependent RNA helicase dbp3 (dbp3) (Emericella nidulans (strain FGSC A4 / ATCC 38163 / CBS 112.46 / NRRL 194 / M139) (Aspergillus nidulans)).